The sequence spans 241 residues: 15,16-dihydrobiliverdin:ferredoxin oxidoreductase (241 aa).

The disordered stretch occupies residues 16–35 (RGGQPAAVPEGLEHCHSSKS).

This sequence belongs to the HY2 family.

The enzyme catalyses 15,16-dihydrobiliverdin + oxidized 2[4Fe-4S]-[ferredoxin] = biliverdin IXalpha + reduced 2[4Fe-4S]-[ferredoxin] + 2 H(+). Its function is as follows. Catalyzes the two-electron reduction of biliverdin IX-alpha at the C15 methine bridge. The chain is 15,16-dihydrobiliverdin:ferredoxin oxidoreductase from Synechococcus sp. (strain WH7803).